The primary structure comprises 132 residues: Small ribosomal subunit protein uS11c (132 aa).

The protein belongs to the universal ribosomal protein uS11 family. Part of the 30S ribosomal subunit.

Its subcellular location is the plastid. The protein localises to the chloroplast. This is Small ribosomal subunit protein uS11c from Cryptomeria japonica (Japanese cedar).